We begin with the raw amino-acid sequence, 690 residues long: Protein-glutamine gamma-glutamyltransferase 2 (690 aa).

Ala-2 bears the N-acetylalanine mark. 2 disulfide bridges follow: Cys-230/Cys-370 and Cys-370/Cys-371. Residues Cys-277, His-335, and Asp-358 contribute to the active site. Residues Asn-398, Asp-400, Glu-436, Glu-446, and Glu-451 each contribute to the Ca(2+) site. Lys-467 is subject to N6-acetyllysine. Position 479–486 (479–486) interacts with GTP; sequence RIRVGQNM. Residue Glu-542 participates in Ca(2+) binding. 583–586 lines the GTP pocket; that stretch reads RDIY. Gln-636 participates in a covalent cross-link: Isoglutamyl lysine isopeptide (Gln-Lys) (interchain with K-?).

This sequence belongs to the transglutaminase superfamily. Transglutaminase family. As to quaternary structure, monomer. Interacts with phospholipase C; promoting alpha-1 adrenergic receptor signaling. Interacts with PLCD1. Requires Ca(2+) as cofactor. Post-translationally, disulfide bond formation inactivates the calcium-dependent acyltransferase activity. Cys-370 can form disulfide bonds with both Cys-230 and Cys-371: formation of a disulfide bond between Cys-230 and Cys-370 facilitates formation of the disulfide between Cys-370 and Cys-371, which promotes inactivation of the acyltransferase activity. May also form interchain disulfids between Cys-230 and Cys-370. Ca(2+) protects against disulfide bond formation and inactivation. Auto-transglutaminated: Forms covalent cross-links mediated by transglutaminase between Gln-636 and the epsilon-amino group of a lysine residue of itself or HMGB1, forming homopolymers and heteropolymers, respectively. In terms of processing, S-nitrosylated, leading to inactivation of the acyltransferase activity.

It is found in the cytoplasm. Its subcellular location is the cytosol. It localises to the nucleus. The protein localises to the chromosome. The protein resides in the secreted. It is found in the extracellular space. Its subcellular location is the extracellular matrix. It localises to the cell membrane. The protein localises to the mitochondrion. It carries out the reaction L-glutaminyl-[protein] + L-lysyl-[protein] = [protein]-L-lysyl-N(6)-5-L-glutamyl-[protein] + NH4(+). The catalysed reaction is L-glutaminyl-[protein] + serotonin = 5-serotonyl-L-glutamyl-[protein] + NH4(+). It catalyses the reaction L-glutaminyl-[protein] + dopamine = 5-dopaminyl-L-glutamyl-[protein] + NH4(+). The enzyme catalyses L-glutaminyl-[protein] + histamine = 5-histaminyl-L-glutamyl-[protein] + NH4(+). It carries out the reaction L-glutaminyl-[protein] + (R)-noradrenaline = 5-(R)-noradrenalinyl-L-glutamyl-[protein] + NH4(+). The catalysed reaction is L-glutaminyl-[protein] + H2O = L-glutamyl-[protein] + NH4(+). With respect to regulation, acyltransferase activity is regulated by the binding of GTP and Ca(2+): inactivated by GTP, which stabilizes its closed structure, thereby obstructing the accessibility of substrates to the active sites. In contrast, Ca(2+) acts as a cofactor by inducing conformational change to the active open form. In absence of Ca(2+), Mg(2+) may bind Ca(2+)-binding sites, promoting GTP-binding and subsequent inhibition of the acyltransferase activity. Extracellularly reduced and activated by CLIC3. Functionally, calcium-dependent acyltransferase that catalyzes the formation of covalent bonds between peptide-bound glutamine and various primary amines, such as gamma-amino group of peptide-bound lysine, or mono- and polyamines, thereby producing cross-linked or aminated proteins, respectively. Involved in many biological processes, such as bone development, angiogenesis, wound healing, cellular differentiation, chromatin modification and apoptosis. Acts as a protein-glutamine gamma-glutamyltransferase by mediating the cross-linking of proteins, such as ACO2, HSPB6, FN1, HMGB1, RAP1GDS1, SLC25A4/ANT1, SPP1 and WDR54. Under physiological conditions, the protein cross-linking activity is inhibited by GTP; inhibition is relieved by Ca(2+) in response to various stresses. When secreted, catalyzes cross-linking of proteins of the extracellular matrix, such as FN1 and SPP1 resulting in the formation of scaffolds. Plays a key role during apoptosis, both by (1) promoting the cross-linking of cytoskeletal proteins resulting in condensation of the cytoplasm, and by (2) mediating cross-linking proteins of the extracellular matrix, resulting in the irreversible formation of scaffolds that stabilize the integrity of the dying cells before their clearance by phagocytosis, thereby preventing the leakage of harmful intracellular components. In addition to protein cross-linking, can use different monoamine substrates to catalyze a vast array of protein post-translational modifications: mediates aminylation of serotonin, dopamine, noradrenaline or histamine into glutamine residues of target proteins to generate protein serotonylation, dopaminylation, noradrenalinylation or histaminylation, respectively. Mediates protein serotonylation of small GTPases during activation and aggregation of platelets, leading to constitutive activation of these GTPases. Plays a key role in chromatin organization by mediating serotonylation and dopaminylation of histone H3. Catalyzes serotonylation of 'Gln-5' of histone H3 (H3Q5ser) during serotonergic neuron differentiation, thereby facilitating transcription. Acts as a mediator of neurotransmission-independent role of nuclear dopamine in ventral tegmental area (VTA) neurons: catalyzes dopaminylation of 'Gln-5' of histone H3 (H3Q5dop), thereby regulating relapse-related transcriptional plasticity in the reward system. Regulates vein remodeling by mediating serotonylation and subsequent inactivation of ATP2A2/SERCA2. Also acts as a protein deamidase by mediating the side chain deamidation of specific glutamine residues of proteins to glutamate. Catalyzes specific deamidation of protein gliadin, a component of wheat gluten in the diet. May also act as an isopeptidase cleaving the previously formed cross-links. Also able to participate in signaling pathways independently of its acyltransferase activity: acts as a signal transducer in alpha-1 adrenergic receptor-mediated stimulation of phospholipase C-delta (PLCD) activity and is required for coupling alpha-1 adrenergic agonists to the stimulation of phosphoinositide lipid metabolism. The sequence is that of Protein-glutamine gamma-glutamyltransferase 2 from Cavia cutleri (Guinea pig).